The chain runs to 223 residues: Small ribosomal subunit protein uS3 (223 aa).

The region spanning 38-106 (LKAELKEKLK…EVYIDIQEVH (69 aa)) is the KH type-2 domain.

Belongs to the universal ribosomal protein uS3 family. As to quaternary structure, part of the 30S ribosomal subunit. Forms a tight complex with proteins S10 and S14.

In terms of biological role, binds the lower part of the 30S subunit head. Binds mRNA in the 70S ribosome, positioning it for translation. This is Small ribosomal subunit protein uS3 from Koribacter versatilis (strain Ellin345).